We begin with the raw amino-acid sequence, 247 residues long: MGRGRVELKRVENKINRQVTFAKRRNGLLKKAYELSVLCDAEVALIVFSNRGKLYEFCSTSSMLKTLERYQKCNYGAPEGNVTSKEALVLELSSQQEYLKLKARYESLQRSQRNLMGEDLGPLSSKDLETLERQLDSSLKQIRSTRTQFMLDQLGDLQRKEHLLCEANRALRQRMEGYQINSLQLNLSAEDMGYGRHHQGHTHGDELFQVQPIECEPTLQIGYHQGDPGSVVTAGPSMNNYMGGWLP.

The region spanning 1 to 61 (MGRGRVELKR…GKLYEFCSTS (61 aa)) is the MADS-box domain. The 91-residue stretch at 91–181 (ELSSQQEYLK…RQRMEGYQIN (91 aa)) folds into the K-box domain.

In terms of tissue distribution, expressed abundantly in the seed coat and to lesser extent in young buds, carpels, petals, and stamen.

It localises to the nucleus. Probable transcription factor. The polypeptide is MADS-box transcription factor 1 (Pisum sativum (Garden pea)).